The chain runs to 244 residues: UPF0280 protein MJ1526 (244 aa).

Belongs to the UPF0280 family.

This Methanocaldococcus jannaschii (strain ATCC 43067 / DSM 2661 / JAL-1 / JCM 10045 / NBRC 100440) (Methanococcus jannaschii) protein is UPF0280 protein MJ1526.